Here is a 453-residue protein sequence, read N- to C-terminus: Probable acetylornithine aminotransferase, mitochondrial (453 aa).

Position 302 is an N6-(pyridoxal phosphate)lysine (Lys302).

This sequence belongs to the class-III pyridoxal-phosphate-dependent aminotransferase family. Pyridoxal 5'-phosphate is required as a cofactor.

The protein localises to the mitochondrion matrix. It catalyses the reaction N(2)-acetyl-L-ornithine + 2-oxoglutarate = N-acetyl-L-glutamate 5-semialdehyde + L-glutamate. The protein operates within amino-acid biosynthesis; L-arginine biosynthesis; N(2)-acetyl-L-ornithine from L-glutamate: step 4/4. This is Probable acetylornithine aminotransferase, mitochondrial (argD) from Dictyostelium discoideum (Social amoeba).